The primary structure comprises 394 residues: 1-deoxy-D-xylulose 5-phosphate reductoisomerase (394 aa).

The NADPH site is built by T12, G13, S14, I15, G38, and N126. K127 contacts 1-deoxy-D-xylulose 5-phosphate. Residue E128 coordinates NADPH. D151 serves as a coordination point for Mn(2+). 1-deoxy-D-xylulose 5-phosphate-binding residues include S152, E153, S177, and H200. Residue E153 participates in Mn(2+) binding. G206 is a binding site for NADPH. The 1-deoxy-D-xylulose 5-phosphate site is built by S213, N218, K219, and E222. E222 serves as a coordination point for Mn(2+).

It belongs to the DXR family. Mg(2+) is required as a cofactor. The cofactor is Mn(2+).

The catalysed reaction is 2-C-methyl-D-erythritol 4-phosphate + NADP(+) = 1-deoxy-D-xylulose 5-phosphate + NADPH + H(+). It functions in the pathway isoprenoid biosynthesis; isopentenyl diphosphate biosynthesis via DXP pathway; isopentenyl diphosphate from 1-deoxy-D-xylulose 5-phosphate: step 1/6. Catalyzes the NADPH-dependent rearrangement and reduction of 1-deoxy-D-xylulose-5-phosphate (DXP) to 2-C-methyl-D-erythritol 4-phosphate (MEP). The polypeptide is 1-deoxy-D-xylulose 5-phosphate reductoisomerase (Beutenbergia cavernae (strain ATCC BAA-8 / DSM 12333 / CCUG 43141 / JCM 11478 / NBRC 16432 / NCIMB 13614 / HKI 0122)).